The following is a 420-amino-acid chain: Vasopressin V1a receptor (420 aa).

The tract at residues methionine 1–valine 45 is disordered. Topologically, residues methionine 1 to glutamate 54 are extracellular. An N-linked (GlcNAc...) asparagine glycan is attached at asparagine 27. Basic and acidic residues predominate over residues alanine 32–valine 45. A helical membrane pass occupies residues isoleucine 55–alanine 75. Residues leucine 76–histidine 92 lie on the Cytoplasmic side of the membrane. Residues leucine 93 to isoleucine 113 form a helical membrane-spanning segment. Residues threonine 114 to arginine 125 are Extracellular-facing. Cysteine 124 and cysteine 205 form a disulfide bridge. The chain crosses the membrane as a helical span at residues valine 126–threonine 146. The Cytoplasmic segment spans residues alanine 147–arginine 168. The helical transmembrane segment at leucine 169–phenylalanine 189 threads the bilayer. Residues serine 190 to glycine 225 lie on the Extracellular side of the membrane. Asparagine 198 is a glycosylation site (N-linked (GlcNAc...) asparagine). The helical transmembrane segment at valine 226–tryptophan 246 threads the bilayer. Residues arginine 247–methionine 294 are Cytoplasmic-facing. Residues threonine 295–tryptophan 315 traverse the membrane as a helical segment. The Extracellular portion of the chain corresponds to serine 316–serine 331. Residues isoleucine 332 to phenylalanine 352 traverse the membrane as a helical segment. Over phenylalanine 353 to threonine 420 the chain is Cytoplasmic. S-palmitoyl cysteine attachment occurs at residues cysteine 367 and cysteine 368. The segment at aspartate 379–arginine 411 is disordered. Over residues arginine 385–tryptophan 403 the composition is skewed to polar residues. Serine 406 bears the Phosphoserine mark.

The protein belongs to the G-protein coupled receptor 1 family. Vasopressin/oxytocin receptor subfamily.

The protein localises to the cell membrane. Functionally, receptor for arginine vasopressin. The activity of this receptor is mediated by G proteins which activate a phosphatidyl-inositol-calcium second messenger system. Involved in social memory formation. This chain is Vasopressin V1a receptor (Avpr1a), found in Microtus montanus (Montane vole).